The sequence spans 730 residues: PWWP domain-containing protein 2A (730 aa).

The span at 1 to 15 shows a compositional bias: low complexity; the sequence is MAAVAAEAAATAASP. The interval 1 to 134 is disordered; it reads MAAVAAEAAA…PPAGGDSAVS (134 aa). The span at 66 to 77 shows a compositional bias: pro residues; it reads PLPPPPPPPPPG. Ser-82 and Ser-99 each carry phosphoserine. Residues 91 to 108 are compositionally biased toward pro residues; it reads PEPAAVPVSPPEQPPAAP. The interval 128-346 is interaction with HDAC1 and MTA1; sequence GGDSAVSHLI…KLKTDHKVDG (219 aa). Lys-188 is covalently cross-linked (Glycyl lysine isopeptide (Lys-Gly) (interchain with G-Cter in SUMO2)). Disordered stretches follow at residues 257-276, 311-355, and 409-531; these read YNQS…KRKM, IRKG…SQRR, and KEKA…LGKK. Positions 267 to 276 are enriched in basic residues; that stretch reads RKIKRPKRKM. Composition is skewed to basic and acidic residues over residues 311 to 329 and 341 to 354; these read IRKG…RRND and DHKV…ESQR. Residues 396–547 are interaction with the H2A.Z/H2AZ1; the sequence is MDHAKAREVL…SVYLTLNQET (152 aa). Residues 488–501 show a composition bias toward low complexity; it reads SAGEAPSEKPSPSE. Positions 512-527 are enriched in basic and acidic residues; the sequence is DTSRVRVPGEQEELRM. The PWWP domain maps to 630 to 690; it reads VGDIVWAKIY…LSQLSPFLEN (61 aa).

Component of a MTA1-specific subcomplex of the NuRD complex (M1HR), which is composed of PWWP2A, MTA1/2, HDAC1/2, and RBBP4/7 but does not contain CHD4 and MBD3. Interacts with MTA1; the interaction mediates the association of PWWP2A with the M1HR complex. Interacts with H2A.Z/H2AZ1. Interacts (via PWWP domain) with histone H3 trimethylated at 'Lys-36' (H3K36me3). Does not interact with CHD4 and MBD3.

Its subcellular location is the nucleus. In terms of biological role, chromatin-binding protein that acts as an adapter between distinct nucleosome components (H3K36me3 or H2A.Z) and chromatin-modifying complexes, contributing to the regulation of the levels of histone acetylation at actively transcribed genes. Competes with CHD4 and MBD3 for interaction with MTA1 to form a NuRD subcomplex, preventing the formation of full NuRD complex (containing CHD4 and MBD3), leading to recruitment of HDACs to gene promoters resulting in turn in the deacetylation of nearby H3K27 and H2A.Z. Plays a role in facilitating transcriptional elongation and repression of spurious transcription initiation through regulation of histone acetylation. Essential for proper mitosis progression. The sequence is that of PWWP domain-containing protein 2A (Pwwp2a) from Mus musculus (Mouse).